A 98-amino-acid polypeptide reads, in one-letter code: Integration host factor subunit alpha (98 aa).

The tract at residues 54–74 is disordered; that stretch reads LRDKASRPGRNPKTGENIPVS.

It belongs to the bacterial histone-like protein family. As to quaternary structure, heterodimer of an alpha and a beta chain.

This protein is one of the two subunits of integration host factor, a specific DNA-binding protein that functions in genetic recombination as well as in transcriptional and translational control. The polypeptide is Integration host factor subunit alpha (Actinobacillus succinogenes (strain ATCC 55618 / DSM 22257 / CCUG 43843 / 130Z)).